Consider the following 344-residue polypeptide: Centromere protein N (344 aa).

The protein belongs to the CENP-N/CHL4 family.

It localises to the nucleus. It is found in the chromosome. The protein resides in the centromere. In terms of biological role, probable component of a centromeric complex involved in assembly of kinetochore proteins, mitotic progression and chromosome segregation. This is Centromere protein N (CENPN) from Gallus gallus (Chicken).